A 256-amino-acid polypeptide reads, in one-letter code: 5'-nucleotidase SurE (256 aa).

Residues Asp8, Asp9, Ser40, and Asn94 each coordinate a divalent metal cation.

The protein belongs to the SurE nucleotidase family. A divalent metal cation is required as a cofactor.

Its subcellular location is the cytoplasm. It catalyses the reaction a ribonucleoside 5'-phosphate + H2O = a ribonucleoside + phosphate. Functionally, nucleotidase that shows phosphatase activity on nucleoside 5'-monophosphates. This Wolbachia pipientis subsp. Culex pipiens (strain wPip) protein is 5'-nucleotidase SurE.